A 313-amino-acid chain; its full sequence is Homoserine O-succinyltransferase (313 aa).

Cys142 (acyl-thioester intermediate) is an active-site residue. Residues Lys163 and Ser192 each contribute to the substrate site. His235 serves as the catalytic Proton acceptor. Glu237 is a catalytic residue. Arg249 contributes to the substrate binding site.

Belongs to the MetA family.

It localises to the cytoplasm. The catalysed reaction is L-homoserine + succinyl-CoA = O-succinyl-L-homoserine + CoA. It participates in amino-acid biosynthesis; L-methionine biosynthesis via de novo pathway; O-succinyl-L-homoserine from L-homoserine: step 1/1. Transfers a succinyl group from succinyl-CoA to L-homoserine, forming succinyl-L-homoserine. This Shewanella sp. (strain ANA-3) protein is Homoserine O-succinyltransferase.